A 572-amino-acid polypeptide reads, in one-letter code: Sialate:O-sulfotransferase 1 (572 aa).

At 1-14 (MAKPFFRLQKFLRR) the chain is on the cytoplasmic side. Residues 15-35 (TQFLLLFLTAAYLMTGSLLLL) form a helical; Signal-anchor for type II membrane protein membrane-spanning segment. The Extracellular segment spans residues 36 to 572 (QRARVALPQA…AGLPREYVPR (537 aa)). Asn105 carries N-linked (GlcNAc...) asparagine glycosylation. The disordered stretch occupies residues 116–135 (HLTSDPQGPPTLGPEASGPA). WSC domains follow at residues 139–231 (QGNY…YSVG) and 242–337 (TATY…DTRC). N-linked (GlcNAc...) asparagine glycans are attached at residues Asn254 and Asn345.

This sequence belongs to the WSCD family.

Its subcellular location is the golgi apparatus membrane. It catalyses the reaction a ganglioside GM1b + 3'-phosphoadenylyl sulfate = an 8-O-sulfo-ganglioside GM1b + adenosine 3',5'-bisphosphate + H(+). Sialate:O-sulfotransferase which catalyzes 8-O-sulfation at the Sia-glycan level using 3'-phosphoadenosine 5'-phosphosulfate (PAPS) as a donor, forming 8-O-sulfated Sia (Sia8S)-glycans. Displays selectivity toward glycolipids such as GM1 gangliosides. This is Sialate:O-sulfotransferase 1 (Wscd1) from Rattus norvegicus (Rat).